The chain runs to 141 residues: Large ribosomal subunit protein uL23B (141 aa).

Residues 1–22 are disordered; the sequence is MSVGKAKGAQKTVQKGIHNKVA.

Belongs to the universal ribosomal protein uL23 family. As to quaternary structure, component of the large ribosomal subunit (LSU). Mature yeast ribosomes consist of a small (40S) and a large (60S) subunit. The 40S small subunit contains 1 molecule of ribosomal RNA (18S rRNA) and at least 33 different proteins. The large 60S subunit contains 3 rRNA molecules (25S, 5.8S and 5S rRNA) and at least 46 different proteins. uL23 is associated with the polypeptide exit tunnel.

The protein localises to the cytoplasm. This protein binds to a specific region on the 26S rRNA. Its function is as follows. Component of the ribosome, a large ribonucleoprotein complex responsible for the synthesis of proteins in the cell. The small ribosomal subunit (SSU) binds messenger RNAs (mRNAs) and translates the encoded message by selecting cognate aminoacyl-transfer RNA (tRNA) molecules. The large subunit (LSU) contains the ribosomal catalytic site termed the peptidyl transferase center (PTC), which catalyzes the formation of peptide bonds, thereby polymerizing the amino acids delivered by tRNAs into a polypeptide chain. The nascent polypeptides leave the ribosome through a tunnel in the LSU and interact with protein factors that function in enzymatic processing, targeting, and the membrane insertion of nascent chains at the exit of the ribosomal tunnel. uL23 is a major component of the universal docking site for these factors at the polypeptide exit tunnel. This is Large ribosomal subunit protein uL23B (rpl2502) from Schizosaccharomyces pombe (strain 972 / ATCC 24843) (Fission yeast).